The sequence spans 548 residues: Eukaryotic translation initiation factor 3 subunit D (548 aa).

Lys53 is subject to N6-acetyllysine. Ser161 carries the phosphoserine modification. The RNA gate stretch occupies residues 285–299 (DFDLLTVSETANEPP). The segment at 523–548 (PDGTFSSDEDEEEEEEEEEEEEEEET) is disordered. Phosphoserine occurs at positions 528 and 529. The span at 529–548 (SDEDEEEEEEEEEEEEEEET) shows a compositional bias: acidic residues.

It belongs to the eIF-3 subunit D family. As to quaternary structure, component of the eukaryotic translation initiation factor 3 (eIF-3) complex, which is composed of 13 subunits: EIF3A, EIF3B, EIF3C, EIF3D, EIF3E, EIF3F, EIF3G, EIF3H, EIF3I, EIF3J, EIF3K, EIF3L and EIF3M. The eIF-3 complex appears to include 3 stable modules: module A is composed of EIF3A, EIF3B, EIF3G and EIF3I; module B is composed of EIF3F, EIF3H, and EIF3M; and module C is composed of EIF3C, EIF3D, EIF3E, EIF3K and EIF3L. EIF3C of module C binds EIF3B of module A and EIF3H of module B, thereby linking the three modules. EIF3J is a labile subunit that binds to the eIF-3 complex via EIF3B. The eIF-3 complex interacts with RPS6KB1 under conditions of nutrient depletion. Mitogenic stimulation leads to binding and activation of a complex composed of MTOR and RPTOR, leading to phosphorylation and release of RPS6KB1 and binding of EIF4B to eIF-3. In terms of assembly, (Microbial infection) Interacts with Norwalk virus VPg protein.

The protein resides in the cytoplasm. Its function is as follows. mRNA cap-binding component of the eukaryotic translation initiation factor 3 (eIF-3) complex, a complex required for several steps in the initiation of protein synthesis of a specialized repertoire of mRNAs. The eIF-3 complex associates with the 40S ribosome and facilitates the recruitment of eIF-1, eIF-1A, eIF-2:GTP:methionyl-tRNAi and eIF-5 to form the 43S pre-initiation complex (43S PIC). The eIF-3 complex stimulates mRNA recruitment to the 43S PIC and scanning of the mRNA for AUG recognition. The eIF-3 complex is also required for disassembly and recycling of post-termination ribosomal complexes and subsequently prevents premature joining of the 40S and 60S ribosomal subunits prior to initiation. The eIF-3 complex specifically targets and initiates translation of a subset of mRNAs involved in cell proliferation, including cell cycling, differentiation and apoptosis, and uses different modes of RNA stem-loop binding to exert either translational activation or repression. In the eIF-3 complex, EIF3D specifically recognizes and binds the 7-methylguanosine cap of a subset of mRNAs. In terms of biological role, (Microbial infection) In case of FCV infection, plays a role in the ribosomal termination-reinitiation event leading to the translation of VP2. This Homo sapiens (Human) protein is Eukaryotic translation initiation factor 3 subunit D.